Here is a 692-residue protein sequence, read N- to C-terminus: Single-strand DNA endonuclease ASTE1 (692 aa).

Belongs to the asteroid family.

Functionally, structure-specific DNA endonuclease that specifically cleaves single-stranded DNA and 3' overhang DNA. The protein is Single-strand DNA endonuclease ASTE1 (aste1a) of Danio rerio (Zebrafish).